A 433-amino-acid chain; its full sequence is Protein arginine N-methyltransferase 2 (433 aa).

The segment at 1–20 is disordered; the sequence is MATSGDCPRSESQGEEPAEC. 2 interaction with ESR1 regions span residues 1-277 and 133-275; these read MATS…SALK and KESL…NLSA. An SH3 domain is found at 30–89; the sequence is VQPEEFVAIADYAATDETQLSFLRGEKILILRQTTADWWWGERAGCCGYIPANHVGKHVD. Asymmetric dimethylarginine is present on residues Arg-61 and Arg-72. An interaction with RB1 region spans residues 83 to 207; that stretch reads HVGKHVDEYD…DVVLPEKVDV (125 aa). Positions 99–432 constitute an SAM-dependent MTase PRMT-type domain; it reads DEEYFGSYGT…KVGEKVFPIW (334 aa). Positions 112, 121, 145, 168, and 197 each coordinate S-adenosyl-L-methionine. Catalysis depends on residues Glu-211 and Glu-220.

The protein belongs to the class I-like SAM-binding methyltransferase superfamily. Protein arginine N-methyltransferase family. As to quaternary structure, self-associates. Interacts with RB1 and E2F1. Interacts with NCOA6 coactivator. Interacts (via SH3 domain) with PRMT8. Interacts with AR. Interacts with NFKBIA. Interacts with ESR1, ESR2, PGR, PPARG, RARA, RXRA and THRB. Interacts with HNRNPUL1. In terms of tissue distribution, widely expressed. Highly expressed in androgen target organs such as heart, prostate, skeletal muscle, ovary and spinal cord.

The protein localises to the cytoplasm. The protein resides in the nucleus. It localises to the nucleolus. It carries out the reaction L-arginyl-[protein] + 2 S-adenosyl-L-methionine = N(omega),N(omega)-dimethyl-L-arginyl-[protein] + 2 S-adenosyl-L-homocysteine + 2 H(+). In terms of biological role, arginine methyltransferase that methylates the guanidino nitrogens of arginyl residues in proteins such as STAT3, FBL, histone H4. Acts as a coactivator (with NCOA2) of the androgen receptor (AR)-mediated transactivation. Acts as a coactivator (with estrogen) of estrogen receptor (ER)-mediated transactivation. Enhances PGR, PPARG, RARA-mediated transactivation. May inhibit NF-kappa-B transcription and promote apoptosis. Represses E2F1 transcriptional activity (in a RB1-dependent manner). May be involved in growth regulation. This is Protein arginine N-methyltransferase 2 (PRMT2) from Homo sapiens (Human).